The sequence spans 584 residues: UvrABC system protein C (584 aa).

Residues Asn12 to Val89 form the GIY-YIG domain. The region spanning Asn194–Ile229 is the UVR domain.

It belongs to the UvrC family. As to quaternary structure, interacts with UvrB in an incision complex.

The protein localises to the cytoplasm. Functionally, the UvrABC repair system catalyzes the recognition and processing of DNA lesions. UvrC both incises the 5' and 3' sides of the lesion. The N-terminal half is responsible for the 3' incision and the C-terminal half is responsible for the 5' incision. The sequence is that of UvrABC system protein C from Mycoplasma mycoides subsp. mycoides SC (strain CCUG 32753 / NCTC 10114 / PG1).